Here is a 534-residue protein sequence, read N- to C-terminus: Probable bifunctional tRNA threonylcarbamoyladenosine biosynthesis protein (534 aa).

The tract at residues 1 to 324 (MICLGIEGTA…YRTDQVEVTW (324 aa)) is kae1. Residues His108, His112, and Tyr129 each coordinate Fe cation. L-threonylcarbamoyladenylate-binding positions include 129–133 (YTSGG), Asp161, Gly174, Glu178, and Asn258. Position 286 (Asp286) interacts with Fe cation. The 200-residue stretch at 335–534 (LPDNIKEKGA…DEIEKRGRYL (200 aa)) folds into the Protein kinase domain. Residues 340–348 (KEKGAEADI) and Lys361 each bind ATP. Asp455 functions as the Proton acceptor; for kinase activity in the catalytic mechanism.

This sequence in the N-terminal section; belongs to the KAE1 / TsaD family. In the C-terminal section; belongs to the protein kinase superfamily. Tyr protein kinase family. BUD32 subfamily. Component of the KEOPS complex that consists of Kae1, Bud32, Cgi121 and Pcc1; the whole complex dimerizes. Fe(2+) is required as a cofactor.

It localises to the cytoplasm. The catalysed reaction is L-seryl-[protein] + ATP = O-phospho-L-seryl-[protein] + ADP + H(+). The enzyme catalyses L-threonyl-[protein] + ATP = O-phospho-L-threonyl-[protein] + ADP + H(+). It carries out the reaction L-threonylcarbamoyladenylate + adenosine(37) in tRNA = N(6)-L-threonylcarbamoyladenosine(37) in tRNA + AMP + H(+). Its function is as follows. Required for the formation of a threonylcarbamoyl group on adenosine at position 37 (t(6)A37) in tRNAs that read codons beginning with adenine. Is a component of the KEOPS complex that is probably involved in the transfer of the threonylcarbamoyl moiety of threonylcarbamoyl-AMP (TC-AMP) to the N6 group of A37. The Kae1 domain likely plays a direct catalytic role in this reaction. The Bud32 domain probably displays kinase activity that regulates Kae1 function. The protein is Probable bifunctional tRNA threonylcarbamoyladenosine biosynthesis protein of Methanosphaera stadtmanae (strain ATCC 43021 / DSM 3091 / JCM 11832 / MCB-3).